A 327-amino-acid chain; its full sequence is Phosphate acyltransferase (327 aa).

It belongs to the PlsX family. Homodimer. Probably interacts with PlsY.

Its subcellular location is the cytoplasm. It catalyses the reaction a fatty acyl-[ACP] + phosphate = an acyl phosphate + holo-[ACP]. It participates in lipid metabolism; phospholipid metabolism. Catalyzes the reversible formation of acyl-phosphate (acyl-PO(4)) from acyl-[acyl-carrier-protein] (acyl-ACP). This enzyme utilizes acyl-ACP as fatty acyl donor, but not acyl-CoA. The polypeptide is Phosphate acyltransferase (Thermotoga maritima (strain ATCC 43589 / DSM 3109 / JCM 10099 / NBRC 100826 / MSB8)).